A 403-amino-acid chain; its full sequence is D-mannonate dehydratase Caul1427 (403 aa).

The substrate site is built by asparagine 38 and histidine 123. Tyrosine 160 (proton donor/acceptor) is an active-site residue. Aspartate 211 is a binding site for Mg(2+). Histidine 213 functions as the Proton donor/acceptor in the catalytic mechanism. Mg(2+) is bound by residues glutamate 237 and glutamate 263. 5 residues coordinate substrate: glutamate 263, arginine 284, histidine 313, aspartate 317, and glutamate 340.

The protein belongs to the mandelate racemase/muconate lactonizing enzyme family. GalD subfamily. Mg(2+) serves as cofactor.

The enzyme catalyses D-mannonate = 2-dehydro-3-deoxy-D-gluconate + H2O. Its pathway is carbohydrate metabolism; pentose and glucuronate interconversion. Functionally, catalyzes the dehydration of D-mannonate. Has no detectable activity with a panel of 70 other acid sugars (in vitro). The sequence is that of D-mannonate dehydratase Caul1427 from Caulobacter sp. (strain K31).